The sequence spans 369 residues: 3-dehydroquinate synthase (369 aa).

Residues 75–80 (DGEEHK), 109–113 (GVIGD), 133–134 (TT), Lys146, Lys155, and 173–176 (TLKT) contribute to the NAD(+) site. Zn(2+)-binding residues include Glu188, His251, and His268.

The protein belongs to the sugar phosphate cyclases superfamily. Dehydroquinate synthase family. The cofactor is Co(2+). It depends on Zn(2+) as a cofactor. Requires NAD(+) as cofactor.

The protein resides in the cytoplasm. The enzyme catalyses 7-phospho-2-dehydro-3-deoxy-D-arabino-heptonate = 3-dehydroquinate + phosphate. Its pathway is metabolic intermediate biosynthesis; chorismate biosynthesis; chorismate from D-erythrose 4-phosphate and phosphoenolpyruvate: step 2/7. Catalyzes the conversion of 3-deoxy-D-arabino-heptulosonate 7-phosphate (DAHP) to dehydroquinate (DHQ). The protein is 3-dehydroquinate synthase of Legionella pneumophila subsp. pneumophila (strain Philadelphia 1 / ATCC 33152 / DSM 7513).